Reading from the N-terminus, the 734-residue chain is Photosystem I P700 chlorophyll a apoprotein A2 (734 aa).

A run of 8 helical transmembrane segments spans residues 46-69 (IFAS…FHVA), 135-158 (LYTG…LHLQ), 175-199 (LNHH…HVAI), 273-291 (MAHH…GHMY), 330-353 (IHFQ…QHMY), 369-395 (AALY…IFFI), 417-439 (AIIS…LYVH), and 517-535 (FLVH…LILV). 2 residues coordinate [4Fe-4S] cluster: Cys-559 and Cys-568. 2 consecutive transmembrane segments (helical) span residues 575-596 (AFYL…YWHW) and 643-665 (LSVW…MFLI). Chlorophyll a-binding residues include His-654, Met-662, and Tyr-670. Residue Trp-671 participates in phylloquinone binding. Residues 707–727 (LVGLAHFSVGYIFTYAAFLIA) traverse the membrane as a helical segment.

This sequence belongs to the PsaA/PsaB family. The PsaA/B heterodimer binds the P700 chlorophyll special pair and subsequent electron acceptors. PSI consists of a core antenna complex that captures photons, and an electron transfer chain that converts photonic excitation into a charge separation. The eukaryotic PSI reaction center is composed of at least 11 subunits. It depends on P700 is a chlorophyll a/chlorophyll a' dimer, A0 is one or more chlorophyll a, A1 is one or both phylloquinones and FX is a shared 4Fe-4S iron-sulfur center. as a cofactor.

The protein localises to the plastid. Its subcellular location is the chloroplast thylakoid membrane. It carries out the reaction reduced [plastocyanin] + hnu + oxidized [2Fe-2S]-[ferredoxin] = oxidized [plastocyanin] + reduced [2Fe-2S]-[ferredoxin]. Functionally, psaA and PsaB bind P700, the primary electron donor of photosystem I (PSI), as well as the electron acceptors A0, A1 and FX. PSI is a plastocyanin-ferredoxin oxidoreductase, converting photonic excitation into a charge separation, which transfers an electron from the donor P700 chlorophyll pair to the spectroscopically characterized acceptors A0, A1, FX, FA and FB in turn. Oxidized P700 is reduced on the lumenal side of the thylakoid membrane by plastocyanin. The chain is Photosystem I P700 chlorophyll a apoprotein A2 from Arabis hirsuta (Hairy rock-cress).